Consider the following 94-residue polypeptide: uncharacterized protein (94 aa).

The protein to M.tuberculosis Rv2632c.

This is an uncharacterized protein from Mycobacterium tuberculosis (strain CDC 1551 / Oshkosh).